Consider the following 574-residue polypeptide: MSLPSPSPSRELCPPDPAFAPLSSWPGSGPAGGSTRSGHVLYSGWLRKSPPEKKLRLFAWRKRWFILRRGQTSSDPDVLEYYKNDGSKKPLRTINLNLCEQLDVDVTLNFNKKEIQKGYMFDIKTSERTFYLVAETREDMNEWVQSICQICGFRQEESTGFLGNISSASHGLCSSPAEPSCSHQHLPQEQEPTSEPPVSHCVPPTWPIPAPPGCLRSHQHASQRAEHARSASFSQGSEAPFIMRRNTAMQNLAQHSGYSVDGVSGHIHGFHSLSKPSQHNAEFRGSTHRIPWSLASHGHTRGSLTGSEADNEASSGKYTQHGGGNASRPAESMHEGVCSFLPGRTLVGLSDSIASEGSCVPMNPGSPTLPAVKQAGDDSQGVCIPVGSCLVRFDLLGSPLTELSMHQDLSQGHEVQLPPVNRSLKPNQKANPTPPNLRNNRVINELSFKPPVTEPWSGTSHTFDSSSSQHPISTQSITNTDSEDSGERYLFPNPASAFPVSGGTSSSAPPRSTGNIHYAALDFQPSKPSIGSVTSGKKVDYVQVDLEKTQALQKTMHEQMCLRQSSEPPRGAKL.

The segment at 1–33 (MSLPSPSPSRELCPPDPAFAPLSSWPGSGPAGG) is disordered. A PH domain is found at 39–152 (HVLYSGWLRK…WVQSICQICG (114 aa)). Disordered regions lie at residues 176-200 (PAEP…PVSH), 215-234 (LRSH…ASFS), 293-331 (SLAS…RPAE), and 418-513 (PPVN…PRST). A compositionally biased stretch (polar residues) spans 181–193 (CSHQHLPQEQEPT). Composition is skewed to polar residues over residues 302–318 (GSLT…SGKY) and 424–442 (LKPN…NNRV). A compositionally biased stretch (low complexity) spans 457–478 (SGTSHTFDSSSSQHPISTQSIT). Over residues 502–513 (GGTSSSAPPRST) the composition is skewed to polar residues.

The protein belongs to the GAB family.

The chain is GRB2-associated-binding protein 4 (GAB4) from Homo sapiens (Human).